Reading from the N-terminus, the 63-residue chain is Large ribosomal subunit protein uL29 (63 aa).

This sequence belongs to the universal ribosomal protein uL29 family.

This is Large ribosomal subunit protein uL29 from Pseudoalteromonas translucida (strain TAC 125).